Consider the following 385-residue polypeptide: Glucans biosynthesis protein C (385 aa).

The next 10 helical transmembrane spans lie at 17–37 (AWLM…SHTW), 60–80 (MQVF…RYPL), 91–111 (VGIP…IMLQ), 137–157 (ISHL…VWIF), 173–193 (KFSM…YAVI), 212–232 (FIVM…LAFI), 239–259 (LFTT…VAYL), 274–294 (TESV…FSFG), 311–331 (ASLF…AYIT), and 338–358 (WLGF…LYEI).

The protein belongs to the acyltransferase 3 family. OpgC subfamily.

The protein resides in the cell membrane. It functions in the pathway glycan metabolism; osmoregulated periplasmic glucan (OPG) biosynthesis. Necessary for the succinyl substitution of periplasmic glucans. Could catalyze the transfer of succinyl residues from the cytoplasmic side of the membrane to the nascent glucan backbones on the periplasmic side of the membrane. This chain is Glucans biosynthesis protein C, found in Shigella dysenteriae serotype 1 (strain Sd197).